The sequence spans 1038 residues: Importin-7 (1038 aa).

An N-acetylmethionine modification is found at Met1. The Importin N-terminal domain maps to 22–101; the sequence is AERQLNEAHK…RENIVEAIIH (80 aa). The disordered stretch occupies residues 881 to 910; the sequence is EHENDSDDDEDAEDDDETEELGSDEDDIDE. A compositionally biased stretch (acidic residues) spans 884–910; sequence NDSDDDEDAEDDDETEELGSDEDDIDE. Residue Ser886 is modified to Phosphoserine. Thr898 is modified (phosphothreonine). A phosphoserine mark is found at Ser903 and Ser1020.

Belongs to the importin beta family. In terms of assembly, forms a heterodimer with KPNB1. Interacts with histone H1. Interacts with H2A, H2B, H3 and H4 histones. Interacts with SNUPN and XPO1. Interacts with RPS7 and RPL5. Interacts with RPL23A (via BIB domain). Binds directly to nuclear pore complexes. Interacts with SMAD4 and NUP93; translocates SMAD4 to the nucleus through the NPC upon BMP7 stimulation resulting in activation of SMAD4 signaling. Interacts with phosphorylated SMAD2; the interaction facilitates translocation of SMAD2 to the nucleus. Interacts with SRP19. Interacts with RUNX2; the interaction inhibits RUNX2 nuclear translocation in osteoblasts. Interacts with HDAC6, DLX3 and KLF4; the interaction facilitates HDAC6, DLX3 and KLF4 nuclear translocation in dental papilla cells.

It localises to the cytoplasm. It is found in the nucleus. In terms of biological role, functions in nuclear protein import, either by acting as autonomous nuclear transport receptor or as an adapter-like protein in association with the importin-beta subunit KPNB1. Acting autonomously is thought to serve itself as receptor for nuclear localization signals (NLS) and to promote translocation of import substrates through the nuclear pore complex (NPC) by an energy requiring, Ran-dependent mechanism. At the nucleoplasmic side of the NPC, Ran binds to importin, the importin/substrate complex dissociates and importin is re-exported from the nucleus to the cytoplasm where GTP hydrolysis releases Ran. Mediates autonomously the nuclear import of ribosomal proteins RPL23A, RPS7 and RPL5. In association with KPNB1 mediates the nuclear import of H1 histone and the Ran-binding site of IPO7 is not required but synergizes with that of KPNB1 in importin/substrate complex dissociation. Promotes odontoblast differentiation via promoting nuclear translocation of DLX3, KLF4, SMAD2, thereby facilitating the transcription of target genes that play a role in odontoblast differentiation. Facilitates BMP4-induced translocation of SMAD1 to the nucleus and recruitment to the MSX1 gene promoter, thereby promotes the expression of the odontogenic regulator MSX1 in dental mesenchymal cells. Also promotes odontoblast differentiation by facilitating the nuclear translocation of HDAC6 and subsequent repression of RUNX2 expression. Inhibits osteoblast differentiation by inhibiting nuclear translocation of RUNX2 and therefore inhibition of RUNX2 target gene transcription. In vitro, mediates nuclear import of H2A, H2B, H3 and H4 histones. The polypeptide is Importin-7 (Ipo7) (Mus musculus (Mouse)).